Consider the following 1003-residue polypeptide: X-linked retinitis pigmentosa GTPase regulator (1003 aa).

RCC1 repeat units follow at residues 54–105, 106–158, 159–208, 209–261, 262–313, and 314–367; these read NKLY…STEG, GKVY…LTED, GELF…VTTE, GQLY…LTEK, AVYT…ITDM, and GLMY…FATP. Serine 418 carries the post-translational modification Phosphoserine. Positions 460–495 are disordered; it reads TPEKEGLTQPEPDYFRDNMAKGKETDNSSATDSESL. The span at 472–485 shows a compositional bias: basic and acidic residues; that stretch reads DYFRDNMAKGKETD. A compositionally biased stretch (polar residues) spans 486-495; the sequence is NSSATDSESL. Phosphoserine is present on serine 520. 4 disordered regions span residues 625-657, 691-760, 794-932, and 968-1003; these read FKAI…LAEM, ESKD…TDQN, LSEI…DVKK, and AFKG…CTIL. Over residues 693 to 715 the composition is skewed to basic and acidic residues; it reads KDFVKDSRRNKQDVIFDSERESI. 2 stretches are compositionally biased toward acidic residues: residues 716-726 and 797-821; these read EEPDSYLEGES and IPEE…EANE. Residues 827–848 show a composition bias toward basic and acidic residues; sequence AGKEEKEIEILSDDLTDRAEDH. Over residues 849 to 867 the composition is skewed to acidic residues; the sequence is EFSEDEEPEDMAEELDEDL. Basic and acidic residues predominate over residues 882-896; it reads SLKKDETTKQEKRAI. The segment covering 913-924 has biased composition (low complexity); the sequence is SSSSEVLNDSES. The segment covering 978–989 has biased composition (polar residues); that stretch reads QNHMGQNHQDTS. Residue cysteine 1000 is modified to Cysteine methyl ester. The S-geranylgeranyl cysteine moiety is linked to residue cysteine 1000. Positions 1001–1003 are cleaved as a propeptide — removed in mature form; it reads TIL.

As to quaternary structure, interacts with PDE6D. Interacts with RPGRIP1. Interacts with RPGRIP1L. PDE6D, RPGRIP1 and RPGRIP1L may compete for the same binding sites. Interacts with NPM1. Interacts with SMC1A and SMC3. Interacts with CEP290. Interacts with WHRN. Interacts with SPATA7. Interacts with RAB37 and RAB8A (in GDP-bound forms); functions as GEF for RAB37 and RAB8A. Post-translationally, prenylated. In terms of tissue distribution, isoform 1 is expressed exclusively in testis. Isoforms 2, 3 and 4 are widely expressed.

Its subcellular location is the golgi apparatus. It localises to the cell projection. The protein resides in the cilium. The protein localises to the cytoplasm. It is found in the cytoskeleton. Its subcellular location is the cilium basal body. It localises to the microtubule organizing center. The protein resides in the centrosome. The protein localises to the cilium axoneme. It is found in the flagellum axoneme. Its function is as follows. Acts as a guanine-nucleotide releasing factor (GEF) for RAB8A and RAB37 by promoting the conversion of inactive RAB-GDP to the active form RAB-GTP. GEF activity towards RAB8A may facilitate ciliary trafficking by modulating ciliary intracellular localization of RAB8A. GEF activity towards RAB37 maintains autophagic homeostasis and retinal function. Involved in photoreceptor integrity. May control cilia formation by regulating actin stress filaments and cell contractility. May be involved in microtubule organization and regulation of transport in primary cilia. May play a critical role in spermatogenesis and in intraflagellar transport processes. This chain is X-linked retinitis pigmentosa GTPase regulator (RPGR), found in Canis lupus familiaris (Dog).